Reading from the N-terminus, the 397-residue chain is tRNA-specific 2-thiouridylase MnmA (397 aa).

Residues 6 to 13 and Leu-32 each bind ATP; that span reads AMSGGVDS. Cys-101 (nucleophile) is an active-site residue. Residues Cys-101 and Cys-199 are joined by a disulfide bond. Gly-125 provides a ligand contact to ATP. An interaction with tRNA region spans residues 148–150; the sequence is KDQ. Cys-199 acts as the Cysteine persulfide intermediate in catalysis.

This sequence belongs to the MnmA/TRMU family.

It localises to the cytoplasm. It carries out the reaction S-sulfanyl-L-cysteinyl-[protein] + uridine(34) in tRNA + AH2 + ATP = 2-thiouridine(34) in tRNA + L-cysteinyl-[protein] + A + AMP + diphosphate + H(+). In terms of biological role, catalyzes the 2-thiolation of uridine at the wobble position (U34) of tRNA, leading to the formation of s(2)U34. This is tRNA-specific 2-thiouridylase MnmA from Clavibacter sepedonicus (Clavibacter michiganensis subsp. sepedonicus).